The following is a 315-amino-acid chain: Homoserine kinase (315 aa).

97–107 (PPARGLGSSAT) contributes to the ATP binding site.

It belongs to the GHMP kinase family. Homoserine kinase subfamily.

Its subcellular location is the cytoplasm. The catalysed reaction is L-homoserine + ATP = O-phospho-L-homoserine + ADP + H(+). The protein operates within amino-acid biosynthesis; L-threonine biosynthesis; L-threonine from L-aspartate: step 4/5. Its function is as follows. Catalyzes the ATP-dependent phosphorylation of L-homoserine to L-homoserine phosphate. The sequence is that of Homoserine kinase from Synechococcus sp. (strain CC9902).